Consider the following 425-residue polypeptide: Trigger factor (425 aa).

The region spanning 158–231 (GDLVRVNMEV…VEEVYKRTLP (74 aa)) is the PPIase FKBP-type domain.

Belongs to the FKBP-type PPIase family. Tig subfamily.

The protein localises to the cytoplasm. It catalyses the reaction [protein]-peptidylproline (omega=180) = [protein]-peptidylproline (omega=0). Involved in protein export. Acts as a chaperone by maintaining the newly synthesized protein in an open conformation. Functions as a peptidyl-prolyl cis-trans isomerase. The sequence is that of Trigger factor (tig) from Thermotoga maritima (strain ATCC 43589 / DSM 3109 / JCM 10099 / NBRC 100826 / MSB8).